A 225-amino-acid polypeptide reads, in one-letter code: Ribose-5-phosphate isomerase A (225 aa).

Substrate is bound by residues 27–30, 82–85, and 95–98; these read SGST, DGAD, and KGGG. The active-site Proton acceptor is glutamate 104. Lysine 122 serves as a coordination point for substrate.

Belongs to the ribose 5-phosphate isomerase family. As to quaternary structure, homodimer.

It catalyses the reaction aldehydo-D-ribose 5-phosphate = D-ribulose 5-phosphate. The protein operates within carbohydrate degradation; pentose phosphate pathway; D-ribose 5-phosphate from D-ribulose 5-phosphate (non-oxidative stage): step 1/1. Functionally, catalyzes the reversible conversion of ribose-5-phosphate to ribulose 5-phosphate. This Archaeoglobus fulgidus (strain ATCC 49558 / DSM 4304 / JCM 9628 / NBRC 100126 / VC-16) protein is Ribose-5-phosphate isomerase A.